The sequence spans 145 residues: Large ribosomal subunit protein uL15 (145 aa).

2 stretches are compositionally biased toward basic residues: residues 1 to 13 (MVRERTKKLRGGH) and 19 to 29 (KAGRGKGKKGG). The segment at 1 to 33 (MVRERTKKLRGGHYGRGMKAGRGKGKKGGRGNA) is disordered.

It belongs to the universal ribosomal protein uL15 family. Part of the 50S ribosomal subunit.

Binds to the 23S rRNA. In Thermoplasma volcanium (strain ATCC 51530 / DSM 4299 / JCM 9571 / NBRC 15438 / GSS1), this protein is Large ribosomal subunit protein uL15.